A 249-amino-acid polypeptide reads, in one-letter code: DNA polymerase sliding clamp (249 aa).

It belongs to the PCNA family. Homotrimer. The subunits circularize to form a toroid; DNA passes through its center. Replication factor C (RFC) is required to load the toroid on the DNA.

Its function is as follows. Sliding clamp subunit that acts as a moving platform for DNA processing. Responsible for tethering the catalytic subunit of DNA polymerase and other proteins to DNA during high-speed replication. The chain is DNA polymerase sliding clamp from Thermococcus sibiricus (strain DSM 12597 / MM 739).